A 343-amino-acid chain; its full sequence is Dihydroorotate dehydrogenase (quinone) (343 aa).

Residues 61 to 65 (AGLDK) and Thr-85 each bind FMN. Lys-65 serves as a coordination point for substrate. Position 110–114 (110–114 (NRMGF)) interacts with substrate. Residues Asn-138 and Asn-171 each contribute to the FMN site. Asn-171 provides a ligand contact to substrate. The Nucleophile role is filled by Ser-174. Residue Asn-176 coordinates substrate. FMN-binding residues include Lys-216 and Thr-244. A substrate-binding site is contributed by 245 to 246 (NT). Residues Gly-267, Gly-296, and 317 to 318 (YS) contribute to the FMN site.

Belongs to the dihydroorotate dehydrogenase family. Type 2 subfamily. In terms of assembly, monomer. FMN is required as a cofactor.

The protein localises to the cell membrane. The catalysed reaction is (S)-dihydroorotate + a quinone = orotate + a quinol. The protein operates within pyrimidine metabolism; UMP biosynthesis via de novo pathway; orotate from (S)-dihydroorotate (quinone route): step 1/1. Functionally, catalyzes the conversion of dihydroorotate to orotate with quinone as electron acceptor. The polypeptide is Dihydroorotate dehydrogenase (quinone) (Pseudomonas savastanoi pv. phaseolicola (strain 1448A / Race 6) (Pseudomonas syringae pv. phaseolicola (strain 1448A / Race 6))).